Reading from the N-terminus, the 867-residue chain is Nuclear body protein SP140 (867 aa).

Positions 22–138 (VAEIQNVEGQ…IYRSFQNVCY (117 aa)) constitute an HSR domain. Disordered regions lie at residues 260–341 (TYST…EEPQ), 365–432 (TPQV…SEEL), and 486–580 (IANN…KHKD). Positions 268–301 (KQGEEEGRNSPRKRNQDKEKYQESPEGRDKETFD) are enriched in basic and acidic residues. 2 stretches are compositionally biased toward acidic residues: residues 323 to 341 (EGEEGSDDCSEMCDGEEPQ) and 384 to 397 (EGEEGSDDCSEMCD). Residues 404 to 416 (ASSSLARRGSVSS) show a composition bias toward low complexity. 2 stretches are compositionally biased toward basic residues: residues 494–512 (KPKRKRRKKRGHGWSRMRM) and 567–577 (QKRVRSRASRK). The Nuclear localization signal signature appears at 495-514 (PKRKRRKKRGHGWSRMRMRR). The region spanning 580-661 (DETVDFKAPL…RWLMENGFLP (82 aa)) is the SAND domain. Residues 690–736 (LDECEVCRDGGELFCCDTCSRVFHEDCHIPPVEAERTPWNCIFCRMK) form a PHD-type zinc finger. Residue T726 is modified to Phosphothreonine. Residues 754-857 (QMCPEEQLKC…AEFEKNFKEV (104 aa)) form the Bromo domain.

As to quaternary structure, interacts with PIN1. In terms of processing, phosphorylation at Thr-726 promotes binding of PIN1 and subsequent isomerization of Pro-727. As to expression, high levels in spleen and peripheral blood leukocytes, much lower levels in tonsils, thymus, prostate, ovary, small intestine, and colon. Very low levels in heart, brain, placenta, lung, liver, skeletal muscle, kidney, and pancreas. Not detected in brain, liver and muscle.

Its subcellular location is the nucleus. The protein localises to the PML body. It localises to the cytoplasm. Component of the nuclear body, also known as nuclear domain 10, PML oncogenic domain, and KR body. May be involved in the pathogenesis of acute promyelocytic leukemia and viral infection. May play a role in chromatin-mediated regulation of gene expression although it does not bind to histone H3 tails. In Homo sapiens (Human), this protein is Nuclear body protein SP140.